The primary structure comprises 436 residues: AP-2 complex subunit mu-B (436 aa).

The 266-residue stretch at 170–435 (RNELFLDVLE…IGRSGIYETR (266 aa)) folds into the MHD domain. A 1,2-diacyl-sn-glycero-3-phospho-(1D-myo-inositol-3,4,5-trisphosphate) contacts are provided by K342, K346, and K355.

The protein belongs to the adaptor complexes medium subunit family. Adaptor protein complex 2 (AP-2) is a heterotetramer composed of two large adaptins (alpha-type subunit and beta-type subunit), a medium adaptin (mu-type subunit) and a small adaptin (sigma-type subunit).

Its subcellular location is the cell membrane. The protein resides in the membrane. It is found in the coated pit. Functionally, component of the adaptor complexes which link clathrin to receptors in coated vesicles. Clathrin-associated protein complexes are believed to interact with the cytoplasmic tails of membrane proteins, leading to their selection and concentration. AP50 is a subunit of the plasma membrane adaptor. The complex binds polyphosphoinositide-containing lipids. This chain is AP-2 complex subunit mu-B (ap2m1b), found in Danio rerio (Zebrafish).